The following is a 95-amino-acid chain: RING finger protein Z (95 aa).

Polar residues predominate over residues 1-17 (MGNCNRTQKPSSSSNNL). A disordered region spans residues 1-25 (MGNCNRTQKPSSSSNNLEKPPQAAE). The N-myristoyl glycine; by host moiety is linked to residue glycine 2. Residues 40-76 (CKCCWFADKNLITCSDHYLCLRCHQIMLRNSELCNIC) form an RING-type; atypical zinc finger. Residues 90–93 (ASAP) carry the ASAP motif motif.

Belongs to the arenaviridae Z protein family. Interacts with protein NP; this interaction probably directs the encapsidated genome to budding sites. Interacts (via RING domain) with polymerase L; this interaction inhibits viral transcription and replication, Z partially blocks the product exit tunnel for the releasing nascent RNA product. Interacts with the glycoprotein complex; this interaction plays a role in virion budding. Interacts with host eIF4E; this interaction results in eIF4E reduced affinity for its substrate, the 5'-m7 G cap structure. Interacts (via late-budding domain) with host TSG101; this interaction is essential for budding and release of viral particles. Interacts with host RPLP0; this interaction may serve to load ribosome-like particles inside the virion. Interacts with host PML; this interaction induces PML bodies redistribution in the cytoplasm upon viral infection. Post-translationally, myristoylation is required for the role of RING finger protein Z in assembly and budding.

The protein resides in the virion. The protein localises to the host cytoplasm. It localises to the host perinuclear region. It is found in the host cell membrane. Its function is as follows. Plays a crucial role in virion assembly and budding. Expressed late in the virus life cycle, it acts as an inhibitor of viral transcription and RNA synthesis by interacting with the viral polymerase L. Presumably recruits the NP encapsidated genome to cellular membranes at budding sites via direct interaction with NP. Plays critical roles in the final steps of viral release by interacting with host TSG101, a member of the vacuolar protein-sorting pathway and using other cellular host proteins involved in vesicle formation pathway. The budding of the virus progeny occurs after association of protein Z with the viral glycoprotein complex SSP-GP1-GP2 at the cell periphery, step that requires myristoylation of protein Z. Also selectively represses protein production by associating with host eIF4E. In cell-based minigenome assay, has an inhibitory effect on the ribonucleoprotein machinery (vRNP), which is responsible for the replication and transcription of the viral genome. The chain is RING finger protein Z from Tacaribe virus (strain Franze-Fernandez) (TCRV).